Here is a 114-residue protein sequence, read N- to C-terminus: Large ribosomal subunit protein bL19 (114 aa).

The protein belongs to the bacterial ribosomal protein bL19 family.

Its function is as follows. This protein is located at the 30S-50S ribosomal subunit interface and may play a role in the structure and function of the aminoacyl-tRNA binding site. The sequence is that of Large ribosomal subunit protein bL19 from Clavibacter michiganensis subsp. michiganensis (strain NCPPB 382).